Reading from the N-terminus, the 67-residue chain is Large ribosomal subunit protein bL35 (67 aa).

Belongs to the bacterial ribosomal protein bL35 family.

This is Large ribosomal subunit protein bL35 from Rhizorhabdus wittichii (strain DSM 6014 / CCUG 31198 / JCM 15750 / NBRC 105917 / EY 4224 / RW1) (Sphingomonas wittichii).